Here is a 199-residue protein sequence, read N- to C-terminus: Outer dense fiber protein 4 (199 aa).

Basic and acidic residues predominate over residues 1–14; the sequence is MNIRSLERAGRAGK. The segment at 1-25 is disordered; sequence MNIRSLERAGRAGKQDGVAVSPGQE. Ser-53 carries the phosphoserine modification. Transmembrane regions (helical) follow at residues 68-88, 109-128, and 159-179; these read IAQVLASELSLLAFILLVVMV, VTTKIYTSVHIMSLGLLHIY, and LALGLGIILTIWLHLPYIPGL.

It localises to the membrane. Functionally, component of the outer dense fibers (ODF) of spermatozoa which could be involved in sperm tail structure, sperm movement and general organization of cellular cytoskeleton. This chain is Outer dense fiber protein 4 (ODF4), found in Bos taurus (Bovine).